Reading from the N-terminus, the 94-residue chain is 2S albumin-like cysteine protease inhibitor (94 aa).

3 cysteine pairs are disulfide-bonded: cysteine 12-cysteine 35, cysteine 36-cysteine 82, and cysteine 48-cysteine 89.

It belongs to the 2S seed storage albumins family. As to expression, expressed in seeds (at protein level).

Functionally, cysteine protease inhibitor that likely functions in defense against insects by inhibiting cysteine proteases in the midgut of herbivore insects such as C.maculatus. Selectively inhibits cathepsin L, as well as papain, ficin and bromelain with lower efficiency. Shows antitumor activity, inhibiting the growth of prostate cancer cell lines PC3 and DU145, and the gastric cancer cell line Hs746T. No activity against cathepsin B or serine proteases (trypsin, human plasma kallikrein and elastase). The protein is 2S albumin-like cysteine protease inhibitor of Araucaria angustifolia (Brazilian pine tree).